The primary structure comprises 139 residues: Large ribosomal subunit protein bL17 (139 aa).

The protein belongs to the bacterial ribosomal protein bL17 family. As to quaternary structure, part of the 50S ribosomal subunit. Contacts protein L32.

This Afipia carboxidovorans (strain ATCC 49405 / DSM 1227 / KCTC 32145 / OM5) (Oligotropha carboxidovorans) protein is Large ribosomal subunit protein bL17.